A 513-amino-acid polypeptide reads, in one-letter code: Plexin domain-containing protein 2 (513 aa).

Residues 1-24 (MGARSESLVGVVLLFQLLADRLWC) form the signal peptide. The Extracellular portion of the chain corresponds to 25–438 (AATASDSLYD…AEMKTGTLHT (414 aa)). N-linked (GlcNAc...) asparagine glycosylation is found at Asn88, Asn145, Asn198, Asn206, Asn222, and Asn330. Residues 312–357 (TCLQFNSCSSCVSSMIGFNCSWCNIPQRCSSGFDRHRQDWVENGCT) enclose the PSI domain. A helical transmembrane segment spans residues 439-459 (GLIIGILILVLLIITAILVAV). Residues 460–513 (YMYHHPTSSASLFLIERRPSRWPAMKFRRGSGHPAYAEVEPIGEKEGFIVSEQC) are Cytoplasmic-facing.

The protein belongs to the plexin family.

The protein resides in the membrane. The sequence is that of Plexin domain-containing protein 2 (plxdc2) from Xenopus laevis (African clawed frog).